Consider the following 250-residue polypeptide: Ubiquinone/menaquinone biosynthesis C-methyltransferase UbiE (250 aa).

S-adenosyl-L-methionine contacts are provided by residues T73, D94, 122-123, and S139; that span reads NS.

Belongs to the class I-like SAM-binding methyltransferase superfamily. MenG/UbiE family.

The catalysed reaction is a 2-demethylmenaquinol + S-adenosyl-L-methionine = a menaquinol + S-adenosyl-L-homocysteine + H(+). It carries out the reaction a 2-methoxy-6-(all-trans-polyprenyl)benzene-1,4-diol + S-adenosyl-L-methionine = a 5-methoxy-2-methyl-3-(all-trans-polyprenyl)benzene-1,4-diol + S-adenosyl-L-homocysteine + H(+). Its pathway is quinol/quinone metabolism; menaquinone biosynthesis; menaquinol from 1,4-dihydroxy-2-naphthoate: step 2/2. It functions in the pathway cofactor biosynthesis; ubiquinone biosynthesis. Methyltransferase required for the conversion of demethylmenaquinol (DMKH2) to menaquinol (MKH2) and the conversion of 2-polyprenyl-6-methoxy-1,4-benzoquinol (DDMQH2) to 2-polyprenyl-3-methyl-6-methoxy-1,4-benzoquinol (DMQH2). This Wigglesworthia glossinidia brevipalpis protein is Ubiquinone/menaquinone biosynthesis C-methyltransferase UbiE.